The following is a 120-amino-acid chain: MMHHLIQEITKEQLRTDLPDFRPGDTVRVHVKVVEGNRERIQVFEGVVIKRRGAGISENVHGPQSVLWRPALSAHSRVHTPKIAKLEVIRRGKVRRAKLYYLRELRGKAARIKENTNAAQ.

This sequence belongs to the bacterial ribosomal protein bL19 family.

This protein is located at the 30S-50S ribosomal subunit interface and may play a role in the structure and function of the aminoacyl-tRNA binding site. This chain is Large ribosomal subunit protein bL19, found in Geobacillus kaustophilus (strain HTA426).